Here is a 204-residue protein sequence, read N- to C-terminus: Large ribosomal subunit protein eL15 (204 aa).

The protein belongs to the eukaryotic ribosomal protein eL15 family. Component of the large ribosomal subunit.

It is found in the cytoplasm. Component of the large ribosomal subunit. The ribosome is a large ribonucleoprotein complex responsible for the synthesis of proteins in the cell. The sequence is that of Large ribosomal subunit protein eL15 (rpl15) from Cyprinus carpio (Common carp).